Reading from the N-terminus, the 327-residue chain is Zinc transport protein ZntB (327 aa).

Topologically, residues Met1–Met273 are cytoplasmic. The chain crosses the membrane as a helical span at residues Ala274–Ile294. The Periplasmic portion of the chain corresponds to Pro295–Gln300. Residues Phe301–Leu321 traverse the membrane as a helical segment. The Cytoplasmic portion of the chain corresponds to His322–Leu327.

Belongs to the CorA metal ion transporter (MIT) (TC 1.A.35) family.

It is found in the cell inner membrane. It carries out the reaction Zn(2+)(out) + H(+)(out) = Zn(2+)(in) + H(+)(in). Its function is as follows. Zinc transporter. Acts as a Zn(2+):proton symporter, which likely mediates zinc ion uptake. In Escherichia coli O6:K15:H31 (strain 536 / UPEC), this protein is Zinc transport protein ZntB.